Reading from the N-terminus, the 73-residue chain is Large ribosomal subunit protein bL31 (73 aa).

This sequence belongs to the bacterial ribosomal protein bL31 family. Type A subfamily. In terms of assembly, part of the 50S ribosomal subunit.

In terms of biological role, binds the 23S rRNA. This is Large ribosomal subunit protein bL31 from Paracoccus denitrificans (strain Pd 1222).